A 163-amino-acid polypeptide reads, in one-letter code: Putative pre-16S rRNA nuclease (163 aa).

This sequence belongs to the YqgF nuclease family.

It localises to the cytoplasm. Functionally, could be a nuclease involved in processing of the 5'-end of pre-16S rRNA. This Nitrobacter winogradskyi (strain ATCC 25391 / DSM 10237 / CIP 104748 / NCIMB 11846 / Nb-255) protein is Putative pre-16S rRNA nuclease.